The following is a 1888-amino-acid chain: Nuclear pore membrane glycoprotein 210-like (1888 aa).

A signal peptide spans 1 to 35; that stretch reads MTGCPASSRRRGFGLFFFLRLHRLLLLFLVLRGTL. N84, N304, N348, N495, N522, N812, and N931 each carry an N-linked (GlcNAc...) asparagine glycan. In terms of domain architecture, BIG2 spans 1082 to 1154; it reads FPPFRLLPEK…TIQTVNEDTG (73 aa). N-linked (GlcNAc...) asparagine glycosylation occurs at N1445. The helical transmembrane segment at 1813–1833 threads the bilayer; that stretch reads ILLLTLFAVLASTASIFLAYN. An N-linked (GlcNAc...) asparagine glycan is attached at N1859.

It belongs to the NUP210 family.

Its subcellular location is the nucleus membrane. The sequence is that of Nuclear pore membrane glycoprotein 210-like (NUP210L) from Homo sapiens (Human).